A 318-amino-acid chain; its full sequence is Retinol dehydrogenase 5 (318 aa).

A helical membrane pass occupies residues 1–23 (MWLPLLLGALLWAVLWLLRDRQS). The Lumenal segment spans residues 24 to 288 (LPASDAFIFI…TRYSPGWDAK (265 aa)). 32–56 (FITGCDSGFGRLLALQLDQKGFQVL) provides a ligand contact to NADP(+). Residue Ser163 coordinates substrate. Tyr175 functions as the Proton acceptor in the catalytic mechanism. Residues 289–309 (LLWLPASYLPARVVDAVLTWI) form a helical membrane-spanning segment. Over 310–318 (LPRPAQSVS) the chain is Cytoplasmic.

Belongs to the short-chain dehydrogenases/reductases (SDR) family. In terms of assembly, homodimer. Expressed in eye, liver, kidney, brain, intestine, placenta, epididymus and submaxillary gland. In eye, strongly expressed in the retinal pigment epithelium, with lower expression levels detected in the inner segment of the photoreceptor cells and in the outer plexiform layer. In kidney, strong expression detected in the distal tubules and the transitional epithelium in the renal pelvis, with weaker expression detected in the epithelium of the outer stripe of the outer zone of the medulla. In liver, detected in hepatocytes in the centrilobular area. In lung, present in club cells in the epithelium of the bronchiole, in parenchyma and in cartilage surrounding the secondary bronchi. In skin, expressed in epidermis, hair follicles and mast cells in the dermis. Expressed in heart. Not detected in heart. Not detected in lung, spleen, skeletal muscle and testis.

It localises to the endoplasmic reticulum membrane. The enzyme catalyses 11-cis-retinol + NAD(+) = 11-cis-retinal + NADH + H(+). It carries out the reaction 9-cis-retinol + NAD(+) = 9-cis-retinal + NADH + H(+). The catalysed reaction is 13-cis-retinol + NAD(+) = 13-cis-retinal + NADH + H(+). It catalyses the reaction androsterone + NAD(+) = 5alpha-androstan-3,17-dione + NADH + H(+). The enzyme catalyses 5alpha-androstane-3alpha,17beta-diol + NAD(+) = 17beta-hydroxy-5alpha-androstan-3-one + NADH + H(+). Its pathway is cofactor metabolism; retinol metabolism. Inhibited by 9-cis-, 13-cis- and all-trans-retinoic acids, with the most potent inhibitor being 13-cis-retinoic acid. Weakly inhibited by oleic acid. Catalyzes the oxidation of cis-isomers of retinol, including 11-cis-, 9-cis-, and 13-cis-retinol in an NAD-dependent manner. Has no activity towards all-trans retinal. Plays a significant role in 11-cis retinol oxidation in the retinal pigment epithelium cells (RPE). Also recognizes steroids (androsterone, androstanediol) as its substrates. The protein is Retinol dehydrogenase 5 of Mus musculus (Mouse).